We begin with the raw amino-acid sequence, 120 residues long: Spermidine export protein MdtJ (120 aa).

A run of 4 helical transmembrane segments spans residues 1-21 (MFYWILLALAIATEITGTLSM), 31-51 (AGFILMLVMITLSYIFLSFAV), 54-74 (IALGVAYALWEGIGILFITIF), and 81-101 (EALSTMKIAGLLTLVAGIVLI).

It belongs to the drug/metabolite transporter (DMT) superfamily. Small multidrug resistance (SMR) (TC 2.A.7.1) family. MdtJ subfamily. As to quaternary structure, forms a complex with MdtI.

Its subcellular location is the cell inner membrane. In terms of biological role, catalyzes the excretion of spermidine. This chain is Spermidine export protein MdtJ, found in Salmonella agona (strain SL483).